The primary structure comprises 204 residues: MFAVFLQGALLGAAMILPLGPQNAFVMNQGIRRQYHLMVALLCALSDMVLITAGIFGGSALLSQSSLLLGAVTWGGVAFLLWFGWGAMKTAFSKNIVLASAEVMKQSRWRIIATMLAVTWLNPHVYLDTFVVLGSLGSQFAGDARSWFALGTMTASFTWFFALALLASWLAPWLNTPRVQRVINFFVGVVMWGIALQLARHGWQ.

6 helical membrane-spanning segments follow: residues 1-21 (MFAV…PLGP), 37-57 (LMVA…GIFG), 67-87 (LLLG…GWGA), 111-131 (IIAT…DTFV), 147-167 (WFAL…ALLA), and 179-199 (VQRV…LQLA).

Belongs to the LysE/ArgO transporter (TC 2.A.75) family.

It is found in the cell inner membrane. The enzyme catalyses L-arginine(in) = L-arginine(out). In terms of biological role, involved in the export of arginine. Important to control the intracellular level of arginine and the correct balance between arginine and lysine. The polypeptide is Arginine exporter protein ArgO (Pectobacterium carotovorum subsp. carotovorum (strain PC1)).